The sequence spans 1069 residues: ISWI chromatin-remodeling complex ATPase CHR17 (1069 aa).

Positions 1 to 10 (MARASKREVS) are enriched in basic and acidic residues. Disordered regions lie at residues 1–93 (MARA…KEMQ) and 136–168 (FAKS…EECL). Acidic residues-rich tracts occupy residues 15–37 (YSSE…DELE) and 45–78 (SDEE…DEEK). Residues 79–93 (AEISKREKARLKEMQ) are compositionally biased toward basic and acidic residues. Residues 146 to 156 (KKGKGRGRHSS) show a composition bias toward basic residues. The Helicase ATP-binding domain maps to 206–371 (IRLYENGING…WALLNFLLPE (166 aa)). Position 219–226 (219–226 (DEMGLGKT)) interacts with ATP. The short motif at 322-325 (DEAH) is the DEAH box element. The Helicase C-terminal domain maps to 499–650 (LLDKLLPKLK…ALVIQQGRLA (152 aa)). SANT domains are found at residues 845 to 897 (EGFS…VRYK) and 946 to 1007 (QNKG…DTLI). A disordered region spans residues 1016–1069 (EFDERERQARKEKKLSKSATPSKRPSGRQANESPSSLLKKRKQLSMDDYGKRRK). A compositionally biased stretch (polar residues) spans 1032–1051 (KSATPSKRPSGRQANESPSS). The segment covering 1059–1069 (LSMDDYGKRRK) has biased composition (basic and acidic residues).

Belongs to the SNF2/RAD54 helicase family. ISWI subfamily. As to quaternary structure, interacts with RLT1. Binds to FGT1. In terms of tissue distribution, highly expressed in growing tissues such as inflorescence and flower meristems, young leaves and floral organs. Expressed in roots, rosette and cauline leaves, stems, flowers, inflorescences and siliques.

It is found in the nucleus. Its function is as follows. Possesses intrinsic ATP-dependent nucleosome-remodeling activity. Constitutes the catalytic subunit of several complexes capable of forming ordered nucleosome arrays on chromatin. Involved in the formation of nucleosome distribution patterns. Required for the maintenance of the plant vegetative phase. In association with RLT1 or RLT2 may prevent the early activation of the vegetative-to-reproductive transition by regulating key genes that contribute to flower timing, such as FT, SEP1, SEP3, AGL8/FUL, SOC1 and FLC. Necessary to acquire heat stress (HS) memory. The chain is ISWI chromatin-remodeling complex ATPase CHR17 from Arabidopsis thaliana (Mouse-ear cress).